The primary structure comprises 246 residues: Ribonuclease PH (246 aa).

Phosphate-binding positions include Arg-91 and 129-131 (GTR).

The protein belongs to the RNase PH family. Homohexameric ring arranged as a trimer of dimers.

The enzyme catalyses tRNA(n+1) + phosphate = tRNA(n) + a ribonucleoside 5'-diphosphate. In terms of biological role, phosphorolytic 3'-5' exoribonuclease that plays an important role in tRNA 3'-end maturation. Removes nucleotide residues following the 3'-CCA terminus of tRNAs; can also add nucleotides to the ends of RNA molecules by using nucleoside diphosphates as substrates, but this may not be physiologically important. Probably plays a role in initiation of 16S rRNA degradation (leading to ribosome degradation) during starvation. The polypeptide is Ribonuclease PH (Burkholderia ambifaria (strain MC40-6)).